The chain runs to 366 residues: A-type ATP synthase subunit C (366 aa).

This sequence belongs to the V-ATPase V0D/AC39 subunit family. Has multiple subunits with at least A(3), B(3), C, D, E, F, H, I and proteolipid K(x).

The protein localises to the cell membrane. Component of the A-type ATP synthase that produces ATP from ADP in the presence of a proton gradient across the membrane. This is A-type ATP synthase subunit C from Thermococcus onnurineus (strain NA1).